The chain runs to 334 residues: MEAAHFFEGTEKLLEVWFSRQQSDASQGSGDLRTIPRSEWDVLLKDVQCSIISVTKTDKQEAYVLSESSMFVSKRRFILKTCGTTLLLKALVPLLKLARDYSGFDSIQSFFYSRKNFMKPSHQGYPHRNFQEEIEFLNAIFPNGAAYCMGRMNSDCWYLYTLDFPESRVISQPDQTLEILMSELDPAVMDQFYMKDGVTAKDVTRESGIRDLIPGSVIDATLFNPCGYSMNGMKSDGTYWTIHITPEPEFSYVSFETNLSQTSYDDLIRKVVEVFKPGKFVTTLFVNQSSKCRTVLSSPQKIDGFKRLDCQSAMFNDYNFVFTSFAKKQQQQQS.

Phenylalanine 7 is a substrate binding site. Residues glutamate 8 and glutamate 11 contribute to the active site. Glutamate 67 contacts substrate. The Schiff-base intermediate with substrate; via pyruvic acid role is filled by serine 68. Serine 68 carries the pyruvic acid (Ser); by autocatalysis modification. Catalysis depends on cysteine 82, which acts as the Proton donor; for catalytic activity. A substrate-binding site is contributed by phenylalanine 223. Active-site proton acceptor; for processing activity residues include serine 229 and histidine 243. Glutamate 247 serves as a coordination point for substrate. Position 298 is a phosphoserine (serine 298).

This sequence belongs to the eukaryotic AdoMetDC family. Heterotetramer of two alpha and two beta chains. Pyruvate is required as a cofactor. Is synthesized initially as an inactive proenzyme. Formation of the active enzyme involves a self-maturation process in which the active site pyruvoyl group is generated from an internal serine residue via an autocatalytic post-translational modification. Two non-identical subunits are generated from the proenzyme in this reaction, and the pyruvate is formed at the N-terminus of the alpha chain, which is derived from the carboxyl end of the proenzyme. The post-translation cleavage follows an unusual pathway, termed non-hydrolytic serinolysis, in which the side chain hydroxyl group of the serine supplies its oxygen atom to form the C-terminus of the beta chain, while the remainder of the serine residue undergoes an oxidative deamination to produce ammonia and the pyruvoyl group blocking the N-terminus of the alpha chain. Expressed in embryonic stem cells; subsequently down-regulated in differentiating neural precursor cells.

The catalysed reaction is S-adenosyl-L-methionine + H(+) = S-adenosyl 3-(methylsulfanyl)propylamine + CO2. It participates in amine and polyamine biosynthesis; S-adenosylmethioninamine biosynthesis; S-adenosylmethioninamine from S-adenosyl-L-methionine: step 1/1. In terms of biological role, essential for biosynthesis of the polyamines spermidine and spermine. Promotes maintenance and self-renewal of embryonic stem cells, by maintaining spermine levels. The chain is S-adenosylmethionine decarboxylase proenzyme 1 (Amd1) from Mus musculus (Mouse).